We begin with the raw amino-acid sequence, 70 residues long: Cytochrome c oxidase subunit 8B, mitochondrial (70 aa).

The N-terminal 24 residues, 1-24, are a transit peptide targeting the mitochondrion; the sequence is MPRLPPALRLLQPPLRCWVVPKLH. At 25–35 the chain is on the mitochondrial matrix side; sequence VSAKPARTPTS. Residues 36–59 traverse the membrane as a helical segment; the sequence is PAEQAVGLSMMFLSFLVPAGWVLS. Over 60–70 the chain is Mitochondrial intermembrane; that stretch reads HLESYKKSSTA.

It belongs to the cytochrome c oxidase VIII family. As to quaternary structure, component of the cytochrome c oxidase (complex IV, CIV), a multisubunit enzyme composed of 14 subunits. The complex is composed of a catalytic core of 3 subunits MT-CO1, MT-CO2 and MT-CO3, encoded in the mitochondrial DNA, and 11 supernumerary subunits COX4I, COX5A, COX5B, COX6A, COX6B, COX6C, COX7A, COX7B, COX7C, COX8 and NDUFA4, which are encoded in the nuclear genome. The complex exists as a monomer or a dimer and forms supercomplexes (SCs) in the inner mitochondrial membrane with NADH-ubiquinone oxidoreductase (complex I, CI) and ubiquinol-cytochrome c oxidoreductase (cytochrome b-c1 complex, complex III, CIII), resulting in different assemblies (supercomplex SCI(1)III(2)IV(1) and megacomplex MCI(2)III(2)IV(2)).

It is found in the mitochondrion inner membrane. The protein operates within energy metabolism; oxidative phosphorylation. In terms of biological role, component of the cytochrome c oxidase, the last enzyme in the mitochondrial electron transport chain which drives oxidative phosphorylation. The respiratory chain contains 3 multisubunit complexes succinate dehydrogenase (complex II, CII), ubiquinol-cytochrome c oxidoreductase (cytochrome b-c1 complex, complex III, CIII) and cytochrome c oxidase (complex IV, CIV), that cooperate to transfer electrons derived from NADH and succinate to molecular oxygen, creating an electrochemical gradient over the inner membrane that drives transmembrane transport and the ATP synthase. Cytochrome c oxidase is the component of the respiratory chain that catalyzes the reduction of oxygen to water. Electrons originating from reduced cytochrome c in the intermembrane space (IMS) are transferred via the dinuclear copper A center (CU(A)) of subunit 2 and heme A of subunit 1 to the active site in subunit 1, a binuclear center (BNC) formed by heme A3 and copper B (CU(B)). The BNC reduces molecular oxygen to 2 water molecules using 4 electrons from cytochrome c in the IMS and 4 protons from the mitochondrial matrix. This Eulemur fulvus fulvus (Brown lemur) protein is Cytochrome c oxidase subunit 8B, mitochondrial (COX8B).